The following is a 544-amino-acid chain: CTP synthase (544 aa).

Positions 1 to 267 (MSKFVFVTGG…GDLLVSRLHL (267 aa)) are amidoligase domain. Ser13 serves as a coordination point for CTP. Ser13 contributes to the UTP binding site. 14–19 (SVGKGI) contacts ATP. Residue Tyr54 coordinates L-glutamine. ATP is bound at residue Asp71. 2 residues coordinate Mg(2+): Asp71 and Glu141. Residues 148–150 (DIE), 188–193 (KTKPTQ), and Lys224 contribute to the CTP site. UTP is bound by residues 188–193 (KTKPTQ) and Lys224. A Glutamine amidotransferase type-1 domain is found at 299–534 (YVELKDAYYS…INAAKKVIRD (236 aa)). An L-glutamine-binding site is contributed by Gly354. Cys381 functions as the Nucleophile; for glutamine hydrolysis in the catalytic mechanism. L-glutamine contacts are provided by residues 382–385 (LGMQ), Glu405, and Arg462. Residues His507 and Glu509 contribute to the active site.

The protein belongs to the CTP synthase family. Homotetramer.

The catalysed reaction is UTP + L-glutamine + ATP + H2O = CTP + L-glutamate + ADP + phosphate + 2 H(+). The enzyme catalyses L-glutamine + H2O = L-glutamate + NH4(+). It carries out the reaction UTP + NH4(+) + ATP = CTP + ADP + phosphate + 2 H(+). Its pathway is pyrimidine metabolism; CTP biosynthesis via de novo pathway; CTP from UDP: step 2/2. Its activity is regulated as follows. Allosterically activated by GTP, when glutamine is the substrate; GTP has no effect on the reaction when ammonia is the substrate. The allosteric effector GTP functions by stabilizing the protein conformation that binds the tetrahedral intermediate(s) formed during glutamine hydrolysis. Inhibited by the product CTP, via allosteric rather than competitive inhibition. Catalyzes the ATP-dependent amination of UTP to CTP with either L-glutamine or ammonia as the source of nitrogen. Regulates intracellular CTP levels through interactions with the four ribonucleotide triphosphates. In Dehalococcoides mccartyi (strain ATCC BAA-2266 / KCTC 15142 / 195) (Dehalococcoides ethenogenes (strain 195)), this protein is CTP synthase.